A 411-amino-acid chain; its full sequence is Putative acid phosphatase 10 (411 aa).

Catalysis depends on H33, which acts as the Nucleophile. D313 acts as the Proton donor in catalysis. A disulfide bridge links C379 with C385.

The protein belongs to the histidine acid phosphatase family.

It catalyses the reaction a phosphate monoester + H2O = an alcohol + phosphate. The polypeptide is Putative acid phosphatase 10 (pho-10) (Caenorhabditis elegans).